The sequence spans 266 residues: Protein-ADP-ribose hydrolase (266 aa).

The 192-residue stretch at 74-265 (TDLKDLKPIK…LYKEALNRDA (192 aa)) folds into the Macro domain. ADP-D-ribose-binding residues include aspartate 93, isoleucine 94, and asparagine 107. Zn(2+)-binding residues include cysteine 113, histidine 118, and cysteine 120. Residues cysteine 120, isoleucine 121, aspartate 122, serine 212, threonine 213, glycine 214, and phenylalanine 216 each coordinate ADP-D-ribose.

This sequence belongs to the MacroD-type family. Zn-Macro subfamily. Monomer. Directly interacts with the lipoylated form of GcvH-L. Zn(2+) serves as cofactor.

It catalyses the reaction 4-O-(ADP-D-ribosyl)-L-aspartyl-[protein] + H2O = L-aspartyl-[protein] + ADP-D-ribose + H(+). In terms of biological role, ADP-ribosylhydrolase that specifically reverses the SirTM-mediated mono-ADP-ribosylation at an asparatate residue of GcvH-L (SAV0324), by releasing ADP-ribose from the target protein. May play a role in the regulation of the response to host-induced oxidative stress. In Staphylococcus aureus (strain Mu50 / ATCC 700699), this protein is Protein-ADP-ribose hydrolase.